Here is a 1479-residue protein sequence, read N- to C-terminus: Putative receptor-type tyrosine-protein phosphatase mosPTP-1 (1479 aa).

The first 28 residues, 1 to 28 (MKPRLLTTVTTWLALVLPVVYLSRPCQA), serve as a signal peptide directing secretion. The Extracellular portion of the chain corresponds to 29 to 365 (LPTVNFTANY…RQSYNDYNLA (337 aa)). N-linked (GlcNAc...) asparagine glycans are attached at residues asparagine 33, asparagine 40, asparagine 146, asparagine 182, asparagine 248, asparagine 294, and asparagine 306. 2 Fibronectin type-III domains span residues 143-242 (KPLN…AGPS) and 243-346 (APKV…VQLN). A helical transmembrane segment spans residues 366-386 (VMIGILICCFGLLFIVLTILL). At 387 to 1479 (WKKCFHAAYY…AKLRAVVRVE (1093 aa)) the chain is on the cytoplasmic side. Tyrosine-protein phosphatase domains are found at residues 452–717 (FSKE…LVEA) and 740–992 (IDSQ…LSYM). Cysteine 658 functions as the Phosphocysteine intermediate in the catalytic mechanism.

The protein belongs to the protein-tyrosine phosphatase family. Receptor class subfamily. Interacts with C-type lectin mosGCTL-1. Interacts with C-type lectin mosGCTL-7.

Its subcellular location is the cell membrane. The catalysed reaction is O-phospho-L-tyrosyl-[protein] + H2O = L-tyrosyl-[protein] + phosphate. Putative protein tyrosine-protein phosphatase. Functionally, (Microbial infection) Facilitates West Nile virus infection in mosquitoes. This Culex quinquefasciatus (Southern house mosquito) protein is Putative receptor-type tyrosine-protein phosphatase mosPTP-1.